The following is a 371-amino-acid chain: Zinc finger CCCH domain-containing protein 21 (371 aa).

The interval 1-64 (MPPKQQPKAD…AAKKKKEEEK (64 aa)) is disordered. Residues 10 to 23 (DLAKKQKQVEDKTF) are compositionally biased toward basic and acidic residues. Positions 34 to 46 (VQKYVQSLKQSVQ) are enriched in polar residues. 2 consecutive C3H1-type zinc fingers follow at residues 88 to 115 (DPKS…HDLN) and 159 to 197 (KPTD…HALP). Coiled coils occupy residues 205 to 237 (QMKA…ATQM) and 283 to 317 (FVDD…GTSK). Residues 290–371 (CEEYEREREQ…IREPNDEGSS (82 aa)) form a disordered region. Over residues 292 to 312 (EYEREREQEETEQKAKNKEAE) the composition is skewed to basic and acidic residues. Acidic residues predominate over residues 330–352 (NEEEEDDDDDDDDLDMDELDELE).

This is Zinc finger CCCH domain-containing protein 21 from Arabidopsis thaliana (Mouse-ear cress).